Here is a 493-residue protein sequence, read N- to C-terminus: Ecdysteroid UDP-glucosyltransferase (493 aa).

Positions 1 to 17 (MIFILLTTLLAVGGAQT) are cleaved as a signal peptide.

Belongs to the UDP-glycosyltransferase family.

In terms of biological role, catalyzes the transfer of glucose from UDP-glucose to ecdysteroids which are insect molting hormones. Expression of egt interferes with normal insect development and block molting. This is Ecdysteroid UDP-glucosyltransferase (egt) from Choristoneura fumiferana defective polyhedrosis virus (Cfdef).